The following is a 396-amino-acid chain: Chalcone synthase A (396 aa).

Cys170 is a catalytic residue.

This sequence belongs to the thiolase-like superfamily. Chalcone/stilbene synthases family.

It catalyses the reaction (E)-4-coumaroyl-CoA + 3 malonyl-CoA + 3 H(+) = 2',4,4',6'-tetrahydroxychalcone + 3 CO2 + 4 CoA. The protein operates within secondary metabolite biosynthesis; flavonoid biosynthesis. Its function is as follows. The primary product of this enzyme is 4,2',4',6'-tetrahydroxychalcone (also termed naringenin-chalcone or chalcone) which can under specific conditions spontaneously isomerize into naringenin. This Ipomoea purpurea (Common morning glory) protein is Chalcone synthase A (CHSA).